The sequence spans 337 residues: MNSWDAGLAGLLVGTMGVSLLSNALVLLCLLHSADIRRQAPALFTLNLTCGNLLCTVVNMPLTLAGVVAQRQPAGDRLCRLAAFLDTFLAANSMLSMAALSIDRWVAVVFPLSYRAKMRLRDAALMVAYTWLHALTFPAAALALSWLGFHQLYASCTLCSRRPDERLRFAVFTGAFHALSFLLSFVVLCCTYLKVLKVARFHCKRIDVITMQTLVLLVDLHPSVRERCLEEQKRRRQRATKKISTFIGTFLVCFAPYVITRLVELFSTVPIGSHWGVLSKCLAYSKAASDPFVYSLLRHQYRKSCKEILNRLLHRRSIHSSGLTGDSHSQNILPVSE.

Residues 1-10 (MNSWDAGLAG) are Extracellular-facing. The chain crosses the membrane as a helical span at residues 11-31 (LLVGTMGVSLLSNALVLLCLL). The Cytoplasmic segment spans residues 32–47 (HSADIRRQAPALFTLN). Residues 48–68 (LTCGNLLCTVVNMPLTLAGVV) traverse the membrane as a helical segment. Topologically, residues 69 to 81 (AQRQPAGDRLCRL) are extracellular. Cysteines 79 and 156 form a disulfide. The helical transmembrane segment at 82–102 (AAFLDTFLAANSMLSMAALSI) threads the bilayer. At 103–123 (DRWVAVVFPLSYRAKMRLRDA) the chain is on the cytoplasmic side. Residues 124–144 (ALMVAYTWLHALTFPAAALAL) traverse the membrane as a helical segment. Over 145–168 (SWLGFHQLYASCTLCSRRPDERLR) the chain is Extracellular. The helical transmembrane segment at 169-189 (FAVFTGAFHALSFLLSFVVLC) threads the bilayer. At 190–245 (CTYLKVLKVARFHCKRIDVITMQTLVLLVDLHPSVRERCLEEQKRRRQRATKKIST) the chain is on the cytoplasmic side. Residues 246 to 266 (FIGTFLVCFAPYVITRLVELF) traverse the membrane as a helical segment. Residues 267 to 276 (STVPIGSHWG) are Extracellular-facing. The helical transmembrane segment at 277 to 297 (VLSKCLAYSKAASDPFVYSLL) threads the bilayer. At 298–337 (RHQYRKSCKEILNRLLHRRSIHSSGLTGDSHSQNILPVSE) the chain is on the cytoplasmic side.

This sequence belongs to the G-protein coupled receptor 1 family. Highly expressed in the CNS, the highest expression is seen in the amygdala, hippocampus and thalamus. Weak expression is detected in testis. Down-regulated in glioblastoma.

Its subcellular location is the cell membrane. Functionally, orphan receptor. Displays a significant level of constitutive activity. Its effect is mediated by G(s)-alpha protein that stimulate adenylate cyclase, resulting in an elevation of intracellular cAMP. The chain is G-protein coupled receptor 26 (GPR26) from Homo sapiens (Human).